Here is a 275-residue protein sequence, read N- to C-terminus: Large ribosomal subunit protein uL2 (275 aa).

2 disordered regions span residues 1–20 (MAVK…TTAD) and 214–275 (WLGR…TRRK). Over residues 255 to 275 (KGLKTRRKRKTSDRFIVTRRK) the composition is skewed to basic residues.

The protein belongs to the universal ribosomal protein uL2 family. As to quaternary structure, part of the 50S ribosomal subunit. Forms a bridge to the 30S subunit in the 70S ribosome.

Functionally, one of the primary rRNA binding proteins. Required for association of the 30S and 50S subunits to form the 70S ribosome, for tRNA binding and peptide bond formation. It has been suggested to have peptidyltransferase activity; this is somewhat controversial. Makes several contacts with the 16S rRNA in the 70S ribosome. The chain is Large ribosomal subunit protein uL2 (rplB) from Deinococcus radiodurans (strain ATCC 13939 / DSM 20539 / JCM 16871 / CCUG 27074 / LMG 4051 / NBRC 15346 / NCIMB 9279 / VKM B-1422 / R1).